Consider the following 310-residue polypeptide: Protoheme IX farnesyltransferase (310 aa).

The next 9 membrane-spanning stretches (helical) occupy residues valine 26–histidine 46, proline 47–leucine 67, glycine 95–alanine 115, leucine 118–tryptophan 138, isoleucine 147–glycine 167, leucine 174–phenylalanine 194, valine 220–glycine 240, leucine 243–tryptophan 263, and phenylalanine 281–alanine 301.

Belongs to the UbiA prenyltransferase family. Protoheme IX farnesyltransferase subfamily. Interacts with CtaA.

The protein localises to the cell inner membrane. The enzyme catalyses heme b + (2E,6E)-farnesyl diphosphate + H2O = Fe(II)-heme o + diphosphate. It functions in the pathway porphyrin-containing compound metabolism; heme O biosynthesis; heme O from protoheme: step 1/1. Functionally, converts heme B (protoheme IX) to heme O by substitution of the vinyl group on carbon 2 of heme B porphyrin ring with a hydroxyethyl farnesyl side group. This is Protoheme IX farnesyltransferase from Cereibacter sphaeroides (strain ATCC 17025 / ATH 2.4.3) (Rhodobacter sphaeroides).